Consider the following 125-residue polypeptide: Phosphoribosyl-AMP cyclohydrolase (125 aa).

Residue Asp-86 coordinates Mg(2+). Zn(2+) is bound at residue Cys-87. Mg(2+) is bound by residues Asp-88 and Asp-90. Residues Cys-103 and Cys-110 each coordinate Zn(2+).

This sequence belongs to the PRA-CH family. Homodimer. Requires Mg(2+) as cofactor. Zn(2+) serves as cofactor.

It localises to the cytoplasm. The enzyme catalyses 1-(5-phospho-beta-D-ribosyl)-5'-AMP + H2O = 1-(5-phospho-beta-D-ribosyl)-5-[(5-phospho-beta-D-ribosylamino)methylideneamino]imidazole-4-carboxamide. The protein operates within amino-acid biosynthesis; L-histidine biosynthesis; L-histidine from 5-phospho-alpha-D-ribose 1-diphosphate: step 3/9. Catalyzes the hydrolysis of the adenine ring of phosphoribosyl-AMP. The sequence is that of Phosphoribosyl-AMP cyclohydrolase from Erythrobacter litoralis (strain HTCC2594).